A 1460-amino-acid chain; its full sequence is Nonribosomal peptide synthetase 6 (1460 aa).

The segment at 63 to 468 is adenylation; it reads EQAALHPEKI…GRQDQQVKLR (406 aa). The region spanning 600-675 is the Carrier 1 domain; it reads EPTTEMEIKL…AMATKIKPLS (76 aa). Residue Ser-636 is modified to O-(pantetheine 4'-phosphoryl)serine. The condensation stretch occupies residues 712-1135; that stretch reads VQDVYPCTPL…AVLDPSEAQD (424 aa). Carrier domains lie at 1168-1241 and 1236-1312; these read SPNE…GNEK and SIGN…EETD. Ser-1202 and Ser-1273 each carry O-(pantetheine 4'-phosphoryl)serine. The tract at residues 1303–1324 is disordered; sequence ELASSAEETDSPQTETNSNAPY. The segment covering 1313-1322 has biased composition (polar residues); the sequence is SPQTETNSNA.

This sequence belongs to the NRP synthetase family.

The protein operates within siderophore biosynthesis. In terms of biological role, NRPS involved in extracellular coprogen-type siderophores biosynthesis. The role of extracellular siderophores in fungal virulence to plants is to supply iron to the fungus during plant infection, but not to act as phytotoxins, depriving their hosts of iron. The protein is Nonribosomal peptide synthetase 6 of Alternaria brassicicola (Dark leaf spot agent).